We begin with the raw amino-acid sequence, 378 residues long: Carbamoyl phosphate synthase small chain (378 aa).

The segment at 1 to 188 is CPSase; the sequence is MSILKEAYLY…THFAYGTSPN (188 aa). Residues Ser-49, Gly-244, and Gly-246 each contribute to the L-glutamine site. Residues 192 to 378 enclose the Glutamine amidotransferase type-1 domain; that stretch reads KVVAIDFGAK…FEEFAKLCCK (187 aa). Cys-272 acts as the Nucleophile in catalysis. L-glutamine contacts are provided by Leu-273, Gln-276, Asn-314, and Tyr-317. Active-site residues include His-355 and Glu-357.

This sequence belongs to the CarA family. As to quaternary structure, composed of two chains; the small (or glutamine) chain promotes the hydrolysis of glutamine to ammonia, which is used by the large (or ammonia) chain to synthesize carbamoyl phosphate. Tetramer of heterodimers (alpha,beta)4.

It carries out the reaction hydrogencarbonate + L-glutamine + 2 ATP + H2O = carbamoyl phosphate + L-glutamate + 2 ADP + phosphate + 2 H(+). The catalysed reaction is L-glutamine + H2O = L-glutamate + NH4(+). The protein operates within amino-acid biosynthesis; L-arginine biosynthesis; carbamoyl phosphate from bicarbonate: step 1/1. Its pathway is pyrimidine metabolism; UMP biosynthesis via de novo pathway; (S)-dihydroorotate from bicarbonate: step 1/3. Its function is as follows. Small subunit of the glutamine-dependent carbamoyl phosphate synthetase (CPSase). CPSase catalyzes the formation of carbamoyl phosphate from the ammonia moiety of glutamine, carbonate, and phosphate donated by ATP, constituting the first step of 2 biosynthetic pathways, one leading to arginine and/or urea and the other to pyrimidine nucleotides. The small subunit (glutamine amidotransferase) binds and cleaves glutamine to supply the large subunit with the substrate ammonia. The protein is Carbamoyl phosphate synthase small chain of Helicobacter hepaticus (strain ATCC 51449 / 3B1).